The chain runs to 276 residues: Pantothenate synthetase (276 aa).

ATP is bound at residue 27–34 (MGALHKGH). The active-site Proton donor is the His34. Residue Gln58 coordinates (R)-pantoate. Gln58 serves as a coordination point for beta-alanine. ATP is bound at residue 147–150 (GKKD). Residue Gln153 participates in (R)-pantoate binding. Residues Val176 and 184-187 (LSSR) each bind ATP.

This sequence belongs to the pantothenate synthetase family. Homodimer.

Its subcellular location is the cytoplasm. It catalyses the reaction (R)-pantoate + beta-alanine + ATP = (R)-pantothenate + AMP + diphosphate + H(+). The protein operates within cofactor biosynthesis; (R)-pantothenate biosynthesis; (R)-pantothenate from (R)-pantoate and beta-alanine: step 1/1. In terms of biological role, catalyzes the condensation of pantoate with beta-alanine in an ATP-dependent reaction via a pantoyl-adenylate intermediate. The sequence is that of Pantothenate synthetase from Helicobacter pylori (strain ATCC 700392 / 26695) (Campylobacter pylori).